Consider the following 332-residue polypeptide: Fructose-1,6-bisphosphatase class 1 (332 aa).

Positions 89, 110, 112, and 113 each coordinate Mg(2+). Substrate contacts are provided by residues 113–116 (DGSS), asparagine 206, tyrosine 239, 257–259 (YLY), and lysine 269. Glutamate 275 lines the Mg(2+) pocket.

Belongs to the FBPase class 1 family. As to quaternary structure, homotetramer. It depends on Mg(2+) as a cofactor.

Its subcellular location is the cytoplasm. It catalyses the reaction beta-D-fructose 1,6-bisphosphate + H2O = beta-D-fructose 6-phosphate + phosphate. It participates in carbohydrate biosynthesis; gluconeogenesis. The chain is Fructose-1,6-bisphosphatase class 1 from Salmonella typhi.